The primary structure comprises 349 residues: 5-deoxyribose 1-phosphate isomerase (349 aa).

Residues 49 to 51 (RGA), arginine 92, and glutamine 199 each bind substrate. Aspartate 240 acts as the Proton donor in catalysis. 250-251 (NK) provides a ligand contact to substrate.

The protein belongs to the EIF-2B alpha/beta/delta subunits family. DrdI subfamily.

The enzyme catalyses 5-deoxy-alpha-D-ribose 1-phosphate = 5-deoxy-D-ribulose 1-phosphate. It functions in the pathway carbohydrate degradation. In terms of biological role, catalyzes the isomerization of 5-deoxy-alpha-D-ribose 1-phosphate to 5-deoxy-D-ribulose 1-phosphate, as part of a 5-deoxyribose salvage pathway that recycles this toxic radical SAM enzyme by-product to mainstream metabolites. The protein is 5-deoxyribose 1-phosphate isomerase of Clostridium botulinum (strain ATCC 19397 / Type A).